Here is a 686-residue protein sequence, read N- to C-terminus: Aminodeoxychorismate synthase (686 aa).

Residues 2 to 194 (RTLLIDNYDS…RDLALAHHRA (193 aa)) enclose the Glutamine amidotransferase type-1 domain. Cys81 acts as the Nucleophile in catalysis. Active-site residues include His168 and Glu170. Residues 233–686 (LDSSSVLEGA…LDGSAVAGAR (454 aa)) form a PABB component region.

It in the C-terminal section; belongs to the anthranilate synthase component I family.

It carries out the reaction chorismate + L-glutamine = 4-amino-4-deoxychorismate + L-glutamate. Its pathway is antibiotic biosynthesis. In terms of biological role, involved in chloramphenicol biosynthesis. Catalyzes the biosynthesis of 4-amino-4-deoxychorismate (ADC) from chorismate and glutamine. This is Aminodeoxychorismate synthase from Streptomyces venezuelae (strain ATCC 10712 / CBS 650.69 / DSM 40230 / JCM 4526 / NBRC 13096 / PD 04745).